The chain runs to 161 residues: Transcription elongation factor GreA (161 aa).

Residues 46-71 (AEYTAAKEKQSFLHGKLQELENNLAL) adopt a coiled-coil conformation.

This sequence belongs to the GreA/GreB family.

In terms of biological role, necessary for efficient RNA polymerase transcription elongation past template-encoded arresting sites. The arresting sites in DNA have the property of trapping a certain fraction of elongating RNA polymerases that pass through, resulting in locked ternary complexes. Cleavage of the nascent transcript by cleavage factors such as GreA or GreB allows the resumption of elongation from the new 3'terminus. GreA releases sequences of 2 to 3 nucleotides. This is Transcription elongation factor GreA from Syntrophus aciditrophicus (strain SB).